We begin with the raw amino-acid sequence, 484 residues long: Dynein regulatory complex subunit 2 (484 aa).

Coiled coils occupy residues 92–160 and 374–403; these read VDCK…RKTI and KEQEGIEENNLEELTEELAKVMVDYTGMEN.

It belongs to the DRC2 family. As to quaternary structure, component of the nexin-dynein regulatory complex (N-DRC). Interacts with DRC1.

The protein resides in the cytoplasm. It localises to the cytoskeleton. It is found in the flagellum basal body. Its subcellular location is the cell projection. The protein localises to the cilium. The protein resides in the flagellum. It localises to the flagellum axoneme. Its function is as follows. Component of the nexin-dynein regulatory complex (N-DRC), a key regulator of ciliary/flagellar motility which maintains the alignment and integrity of the distal axoneme and regulates microtubule sliding in motile axonemes. Plays a critical role in the assembly of N-DRC and also stabilizes the assembly of multiple inner dynein arms and radial spokes. Coassembles with DRC1 to form a central scaffold needed for assembly of the N-DRC and its attachment to the outer doublet microtubules. This Macaca fascicularis (Crab-eating macaque) protein is Dynein regulatory complex subunit 2 (CCDC65).